Consider the following 622-residue polypeptide: WD repeat-containing protein 70 (622 aa).

A compositionally biased stretch (basic and acidic residues) spans Arg-36–Leu-55. The disordered stretch occupies residues Arg-36–Ser-141. Low complexity predominate over residues Ser-67–Glu-84. Positions Ser-120–Asp-132 are enriched in acidic residues. WD repeat units lie at residues His-148–Gln-187, Cys-195–Lys-236, Gly-249–Gly-289, Gly-298–Phe-337, Thr-344–Asn-383, Gly-387–Glu-434, and Val-437–Ala-476. The segment covering Arg-508 to Glu-533 has biased composition (basic and acidic residues). Disordered regions lie at residues Arg-508–Gly-549 and Ala-602–Ile-622. A compositionally biased stretch (gly residues) spans Pro-539–Gly-549. Residues Val-604 to Glu-614 are compositionally biased toward acidic residues.

Belongs to the WD repeat GAD-1 family.

This Xenopus laevis (African clawed frog) protein is WD repeat-containing protein 70 (wdr70).